The primary structure comprises 207 residues: NAD(P)H dehydrogenase (quinone) (207 aa).

The Flavodoxin-like domain occupies 3-194; it reads VQIIFYSMYG…EMAKFQGRHV (192 aa). FMN-binding positions include 9-14 and 82-84; these read SMYGHI and TRF. Tyrosine 11 is an NAD(+) binding site. Position 102 (tryptophan 102) interacts with substrate. FMN contacts are provided by residues 117–123 and histidine 138; that span reads STATQHG.

This sequence belongs to the WrbA family. Requires FMN as cofactor.

It carries out the reaction a quinone + NADH + H(+) = a quinol + NAD(+). The enzyme catalyses a quinone + NADPH + H(+) = a quinol + NADP(+). The polypeptide is NAD(P)H dehydrogenase (quinone) (Aromatoleum aromaticum (strain DSM 19018 / LMG 30748 / EbN1) (Azoarcus sp. (strain EbN1))).